Consider the following 195-residue polypeptide: UPF0316 protein Pcar_2434 (195 aa).

3 helical membrane-spanning segments follow: residues 13–33, 45–65, and 71–91; these read LFLLPLLVFFARIIDVSIGTL, WAGVLGFFESLIWVLAISQVM, and VWTYIAFALGFATGNYVGVLI.

Belongs to the UPF0316 family.

The protein resides in the cell membrane. The chain is UPF0316 protein Pcar_2434 from Syntrophotalea carbinolica (strain DSM 2380 / NBRC 103641 / GraBd1) (Pelobacter carbinolicus).